Reading from the N-terminus, the 191-residue chain is Orotate phosphoribosyltransferase (191 aa).

5-phospho-alpha-D-ribose 1-diphosphate is bound at residue 114–122; the sequence is EDVITTGGS. Orotate contacts are provided by threonine 118 and arginine 146.

The protein belongs to the purine/pyrimidine phosphoribosyltransferase family. PyrE subfamily. In terms of assembly, homodimer. It depends on Mg(2+) as a cofactor.

The enzyme catalyses orotidine 5'-phosphate + diphosphate = orotate + 5-phospho-alpha-D-ribose 1-diphosphate. Its pathway is pyrimidine metabolism; UMP biosynthesis via de novo pathway; UMP from orotate: step 1/2. Catalyzes the transfer of a ribosyl phosphate group from 5-phosphoribose 1-diphosphate to orotate, leading to the formation of orotidine monophosphate (OMP). This is Orotate phosphoribosyltransferase from Caldicellulosiruptor saccharolyticus (strain ATCC 43494 / DSM 8903 / Tp8T 6331).